A 419-amino-acid polypeptide reads, in one-letter code: E3 ubiquitin-protein ligase RNFT1 (419 aa).

The disordered stretch occupies residues 1–120 (MKLRAQFDRG…SGESDLESGE (120 aa)). Composition is skewed to polar residues over residues 31-44 (EPSS…SLTL) and 72-82 (GSSSGSTNGRG). A compositionally biased stretch (basic residues) spans 84-102 (TSRRMRTASHSHSHTHGHG). Transmembrane regions (helical) follow at residues 141 to 161 (FIVI…AVAV), 187 to 207 (LHCA…FYTF), 217 to 237 (FFAN…SVGV), 240 to 260 (FILK…PCPL), 270 to 290 (YMLI…PLWF), and 303 to 323 (VGLT…LLAL). Residues 352–403 (IREAGDICPICQADFKQPRVLVCQHIFCEECIAQWLNQERTCPLCRTVITDK) are required for ubiquitin ligase activity and for protection against ER stress-induced cell death. Residues 359–397 (CPICQADFKQPRVLVCQHIFCEECIAQWLNQERTCPLCR) form an RING-type zinc finger.

The protein resides in the endoplasmic reticulum membrane. It catalyses the reaction S-ubiquitinyl-[E2 ubiquitin-conjugating enzyme]-L-cysteine + [acceptor protein]-L-lysine = [E2 ubiquitin-conjugating enzyme]-L-cysteine + N(6)-ubiquitinyl-[acceptor protein]-L-lysine.. The protein operates within protein modification; protein ubiquitination. Its function is as follows. E3 ubiquitin-protein ligase that acts in the endoplasmic reticulum (ER)-associated degradation (ERAD) pathway, which targets misfolded proteins that accumulate in the endoplasmic reticulum (ER) for ubiquitination and subsequent proteasome-mediated degradation. Protects cells from ER stress-induced apoptosis. The chain is E3 ubiquitin-protein ligase RNFT1 (rnft1) from Danio rerio (Zebrafish).